A 277-amino-acid polypeptide reads, in one-letter code: Uridine phosphorylase (277 aa).

This sequence belongs to the PNP/UDP phosphorylase family.

It localises to the cytoplasm. The enzyme catalyses uridine + phosphate = alpha-D-ribose 1-phosphate + uracil. It participates in pyrimidine metabolism; UMP biosynthesis via salvage pathway; uracil from uridine (phosphorylase route): step 1/1. Functionally, catalyzes the reversible phosphorylytic cleavage of uridine to uracil and ribose-1-phosphate. This Thermococcus kodakarensis (strain ATCC BAA-918 / JCM 12380 / KOD1) (Pyrococcus kodakaraensis (strain KOD1)) protein is Uridine phosphorylase.